Here is a 301-residue protein sequence, read N- to C-terminus: MRIEGVIVATVTPFTKDGVNYESLRTLLSKIVSEGYQGVFPTSSTGEVTKLTFEERVKVMEVAKEVAGGRALVVAGTGTGDHLSTIEIARRYKDVGVDALLITPPYYIQYDWAAIYAFYKRVLDKVDMPTILYTIPLATGYNIPVEVFELVANEYSQVVGVKDSSGDFRYHLDLIHLLGKRLSVLQGLDLLFVPSLLMGAQGGVLAGPNFLGRITLEQYRLVKEGKIAEAVALHNKLMPLWRFMGGCGLVGKLGGKWPTLYKVATQIVRGIDMGPPREPLPPIDDKDRRELEKLLKDLGLI.

Residues serine 44 and tyrosine 107 each act as charge relay system in the active site. Tyrosine 133 functions as the Proton donor in the catalytic mechanism. Lysine 162 serves as the catalytic Schiff-base intermediate with substrate.

It belongs to the DapA family. In terms of assembly, homotetramer.

Its subcellular location is the cytoplasm. This is an uncharacterized protein from Pyrobaculum islandicum (strain DSM 4184 / JCM 9189 / GEO3).